A 41-amino-acid chain; its full sequence is Alpha-conotoxin TxIB (41 aa).

The propeptide occupies 1–20 (FDGRNTSANNKATDLMALPV). 2 cysteine pairs are disulfide-bonded: Cys23–Cys29 and Cys24–Cys37. The interval 25–27 (SDP) is ser-Xaa-Pro motif, crucial for potent interaction with nAChR. Cys37 carries the cysteine amide; in Alpha-conotoxin TxIB modification. The propeptide occupies 39 to 41 (GRR).

It belongs to the conotoxin A superfamily. In terms of tissue distribution, expressed by the venom duct.

The protein localises to the secreted. In terms of biological role, alpha-conotoxins act on postsynaptic membranes, they bind to the nicotinic acetylcholine receptors (nAChR) and thus inhibit them. This conotoxin is a subtype-specific blocker of alpha-6/alpha-3-beta-2-beta-3 (CHRNA6/CHRNA3-CHRNB2-CHRNB3) nAChRs nicotinic acetylcholine receptors (nAChRs) (IC(50)=28.4 nM). This is Alpha-conotoxin TxIB from Conus textile (Cloth-of-gold cone).